Reading from the N-terminus, the 61-residue chain is Small ribosomal subunit protein uS14 (61 aa).

Residues Cys-24, Cys-27, Cys-40, and Cys-43 each contribute to the Zn(2+) site.

Belongs to the universal ribosomal protein uS14 family. Zinc-binding uS14 subfamily. Part of the 30S ribosomal subunit. Contacts proteins S3 and S10. Zn(2+) is required as a cofactor.

Binds 16S rRNA, required for the assembly of 30S particles and may also be responsible for determining the conformation of the 16S rRNA at the A site. In Mycoplasma pneumoniae (strain ATCC 29342 / M129 / Subtype 1) (Mycoplasmoides pneumoniae), this protein is Small ribosomal subunit protein uS14.